A 314-amino-acid chain; its full sequence is Malate dehydrogenase (314 aa).

NAD(+) is bound by residues 11 to 16 (GSGNIG) and aspartate 35. Substrate is bound by residues arginine 84 and arginine 90. NAD(+)-binding positions include asparagine 97 and 120–122 (ITN). Substrate contacts are provided by asparagine 122 and arginine 153. Histidine 177 (proton acceptor) is an active-site residue.

It belongs to the LDH/MDH superfamily. MDH type 3 family.

The enzyme catalyses (S)-malate + NAD(+) = oxaloacetate + NADH + H(+). Functionally, catalyzes the reversible oxidation of malate to oxaloacetate. This chain is Malate dehydrogenase, found in Rickettsia prowazekii (strain Madrid E).